Consider the following 359-residue polypeptide: Trans-enoyl reductase mpsG (359 aa).

NADP(+) contacts are provided by Tyr-212, Leu-259, and Thr-278.

Belongs to the zinc-containing alcohol dehydrogenase family. As to quaternary structure, monomer.

Its pathway is secondary metabolite biosynthesis. Its function is as follows. Trans-enoyl reductase; part of the gene cluster that mediates the biosynthesis of macrophasetins, 3-decalinoyltetramic acids (DTAs) which feature a tetramate (pyrrolidine-2,4-dione) unit connected to a decalin fragment and that have potent bioactivities. The PKS-NRPS mpsA together with its associated enoylreductase partner mpsG incorporate one unit of acetyl-CoA, seven units of malonyl-CoA, and one unit of L-alanine to assemble the linear tetramic acid intermediate corresponding to the backbone of macrophasetins. Without the Diels-Alderase mpsD, the mpsA/G product can undergo the non-enzymatic intramolecular Diels-Alder (IMDA) reaction to generate both macrophasetin A and macrophasetin B. Catalyzed by mpsD, the linear tetramic acid intermediate is thoroughly converted to macrophasetin A via the endo-IMDA reaction in a regioselective and stereoselective manner. Finally, the cytochrome P450 monooxygenase mpsF catalyzes the hydroxylation at C20 to yield the end product macrophasetin C. This is Trans-enoyl reductase mpsG from Macrophomina phaseolina (strain MS6) (Charcoal rot fungus).